The following is a 387-amino-acid chain: Phosphoglycerate kinase (387 aa).

Residues Asp21–Asn23, Arg36, His59–Arg62, Arg113, and Arg146 each bind substrate. Residues Lys197, Glu314, and Gly340 to Thr343 each bind ATP.

The protein belongs to the phosphoglycerate kinase family. In terms of assembly, monomer.

It is found in the cytoplasm. The enzyme catalyses (2R)-3-phosphoglycerate + ATP = (2R)-3-phospho-glyceroyl phosphate + ADP. It participates in carbohydrate degradation; glycolysis; pyruvate from D-glyceraldehyde 3-phosphate: step 2/5. The protein is Phosphoglycerate kinase of Aeromonas hydrophila subsp. hydrophila (strain ATCC 7966 / DSM 30187 / BCRC 13018 / CCUG 14551 / JCM 1027 / KCTC 2358 / NCIMB 9240 / NCTC 8049).